A 460-amino-acid chain; its full sequence is A-type ATP synthase subunit B 1 (460 aa).

The protein belongs to the ATPase alpha/beta chains family. As to quaternary structure, has multiple subunits with at least A(3), B(3), C, D, E, F, H, I and proteolipid K(x).

It localises to the cell membrane. In terms of biological role, component of the A-type ATP synthase that produces ATP from ADP in the presence of a proton gradient across the membrane. The B chain is a regulatory subunit. The sequence is that of A-type ATP synthase subunit B 1 from Methanospirillum hungatei JF-1 (strain ATCC 27890 / DSM 864 / NBRC 100397 / JF-1).